We begin with the raw amino-acid sequence, 600 residues long: Monooxygenase ptmN (600 aa).

The protein belongs to the FMO family. It depends on FAD as a cofactor.

It functions in the pathway secondary metabolite biosynthesis. In terms of biological role, monooxygenase; part of the gene cluster that mediates the biosynthesis of the indole diterpenes penitrems. The geranylgeranyl diphosphate (GGPP) synthase ptmG catalyzes the first step in penitrem biosynthesis via conversion of farnesyl pyrophosphate and isopentyl pyrophosphate into geranylgeranyl pyrophosphate (GGPP). Condensation of indole-3-glycerol phosphate with GGPP by the prenyl transferase ptmC then forms 3-geranylgeranylindole (3-GGI). Epoxidation by the FAD-dependent monooxygenase ptmM leads to a epoxidized-GGI that is substrate of the terpene cyclase ptmB for cyclization to yield paspaline. Paspaline is subsequently converted to 13-desoxypaxilline by the cytochrome P450 monooxygenase ptmP, the latter being then converted to paxilline by the cytochrome P450 monooxygenase ptmQ. Paxilline is converted to beta-paxitriol via C-10 ketoreduction by the short-chain dehydrogenase ptmH which can be monoprenylated at the C-20 by the indole diterpene prenyltransferase ptmD. A two-step elimination (acetylation and elimination) process performed by the O-acetyltransferase ptmV and ptmI leads to the production of the prenylated form of penijanthine. The FAD-linked oxidoreductase ptmO then converts the prenylated form of penijanthine into PC-M5 which is in turn transformed into PC-M4 by the aromatic dimethylallyltransferase ptmE. Five sequential oxidative transformations performed by the cytochrome P450 monooxygenases ptmK, ptmU, ptmL, ptmN and ptmJ yield the various penitrem compounds. PtmK, ptmU and ptmM are involved in the formation of the key bicyclic ring of penitrem C via the formation of the intermediates secopenitrem D and penitrem D. PtmL catalyzes the epoxidation of penitrem D and C to yield penitrem B and F, respectively. PtmJ catalyzes the last benzylic hydroxylation to convert penitrem B to prenitrem E and penitrem F to penitrem A. The sequence is that of Monooxygenase ptmN from Penicillium ochrochloron.